A 1385-amino-acid polypeptide reads, in one-letter code: L-2-aminoadipate reductase large subunit (1385 aa).

The region spanning 843 to 920 (SSFSPLEQEI…ELAKEISRVR (78 aa)) is the Carrier domain. Ser-880 bears the O-(pantetheine 4'-phosphoryl)serine mark.

Belongs to the ATP-dependent AMP-binding enzyme family. Heterodimer of an alpha and a beta subunit. The cofactor is pantetheine 4'-phosphate.

The catalysed reaction is (S)-2-amino-6-oxohexanoate + NADP(+) + H2O = L-2-aminoadipate + NADPH + 2 H(+). It catalyses the reaction (S)-2-amino-6-oxohexanoate + NAD(+) + H2O = L-2-aminoadipate + NADH + 2 H(+). The enzyme catalyses (S)-2-amino-6-oxohexanoate + AMP + diphosphate + NADP(+) = L-2-aminoadipate + ATP + NADPH + H(+). It participates in amino-acid biosynthesis; L-lysine biosynthesis via AAA pathway; L-lysine from L-alpha-aminoadipate (fungal route): step 1/3. Functionally, catalyzes the activation of alpha-aminoadipate by ATP-dependent adenylation and the reduction of activated alpha-aminoadipate by NADPH. The activated alpha-aminoadipate is bound to the phosphopantheinyl group of the enzyme itself before it is reduced to (S)-2-amino-6-oxohexanoate. In Eremothecium gossypii (strain ATCC 10895 / CBS 109.51 / FGSC 9923 / NRRL Y-1056) (Yeast), this protein is L-2-aminoadipate reductase large subunit (LYS2).